A 481-amino-acid polypeptide reads, in one-letter code: Aspartyl/glutamyl-tRNA(Asn/Gln) amidotransferase subunit B (481 aa).

Belongs to the GatB/GatE family. GatB subfamily. As to quaternary structure, heterotrimer of A, B and C subunits.

The catalysed reaction is L-glutamyl-tRNA(Gln) + L-glutamine + ATP + H2O = L-glutaminyl-tRNA(Gln) + L-glutamate + ADP + phosphate + H(+). It carries out the reaction L-aspartyl-tRNA(Asn) + L-glutamine + ATP + H2O = L-asparaginyl-tRNA(Asn) + L-glutamate + ADP + phosphate + 2 H(+). Functionally, allows the formation of correctly charged Asn-tRNA(Asn) or Gln-tRNA(Gln) through the transamidation of misacylated Asp-tRNA(Asn) or Glu-tRNA(Gln) in organisms which lack either or both of asparaginyl-tRNA or glutaminyl-tRNA synthetases. The reaction takes place in the presence of glutamine and ATP through an activated phospho-Asp-tRNA(Asn) or phospho-Glu-tRNA(Gln). The polypeptide is Aspartyl/glutamyl-tRNA(Asn/Gln) amidotransferase subunit B (Pseudomonas syringae pv. tomato (strain ATCC BAA-871 / DC3000)).